An 871-amino-acid polypeptide reads, in one-letter code: Alanine--tRNA ligase (871 aa).

Zn(2+) is bound by residues His-561, His-565, Cys-662, and His-666.

Belongs to the class-II aminoacyl-tRNA synthetase family. Zn(2+) is required as a cofactor.

The protein resides in the cytoplasm. The catalysed reaction is tRNA(Ala) + L-alanine + ATP = L-alanyl-tRNA(Ala) + AMP + diphosphate. Catalyzes the attachment of alanine to tRNA(Ala) in a two-step reaction: alanine is first activated by ATP to form Ala-AMP and then transferred to the acceptor end of tRNA(Ala). Also edits incorrectly charged Ser-tRNA(Ala) and Gly-tRNA(Ala) via its editing domain. The polypeptide is Alanine--tRNA ligase (Dechloromonas aromatica (strain RCB)).